The following is a 306-amino-acid chain: Methionyl-tRNA formyltransferase (306 aa).

A (6S)-5,6,7,8-tetrahydrofolate-binding site is contributed by 110 to 113 (SLLP).

Belongs to the Fmt family.

It catalyses the reaction L-methionyl-tRNA(fMet) + (6R)-10-formyltetrahydrofolate = N-formyl-L-methionyl-tRNA(fMet) + (6S)-5,6,7,8-tetrahydrofolate + H(+). In terms of biological role, attaches a formyl group to the free amino group of methionyl-tRNA(fMet). The formyl group appears to play a dual role in the initiator identity of N-formylmethionyl-tRNA by promoting its recognition by IF2 and preventing the misappropriation of this tRNA by the elongation apparatus. The polypeptide is Methionyl-tRNA formyltransferase (Brucella suis biovar 1 (strain 1330)).